The chain runs to 392 residues: uncharacterized protein (392 aa).

The 70-residue stretch at 7–76 (TEYYDLLGIS…RSQYDQFGKE (70 aa)) folds into the J domain. Serine 108 bears the Phosphoserine mark.

This is an uncharacterized protein from Schizosaccharomyces pombe (strain 972 / ATCC 24843) (Fission yeast).